The primary structure comprises 147 residues: Angiogenin (147 aa).

A signal peptide spans 1–24 (MVMGLGVLLLVFVLGLGLTPPTLA). The residue at position 25 (Gln-25) is a Pyrrolidone carboxylic acid. The Proton acceptor role is filled by His-37. TRNA is bound by residues Arg-45 and Asp-46. 3 disulfide bridges follow: Cys-50–Cys-105, Cys-63–Cys-116, and Cys-81–Cys-131. Positions 55-59 (RRRGL) match the Nucleolar localization signal motif. TRNA contacts are provided by Cys-105 and Val-127. Residue His-138 is the Proton donor of the active site.

The protein belongs to the pancreatic ribonuclease family. In terms of assembly, homodimer. Interacts with RNH1; inhibiting ANG ribonuclease activity. Interacts with PCNA.

It localises to the secreted. It is found in the nucleus. The protein resides in the nucleolus. The protein localises to the cytoplasm. Its subcellular location is the stress granule. Its activity is regulated as follows. Has weak tRNA ribonuclease activity by itself due to partial autoinhibition by its C-terminus, which folds into a short alpha-helix that partially occludes the substrate-binding site. In absence of stress, the ribonuclease activity is inhibited by RNH1 in the cytoplasm. In response to stress, dissociates from RNH1 in the cytoplasm and associates with cytoplasmic ribosomes with vacant A-sites: ribosomes directly activate the tRNA ribonuclease activity of ANG by refolding the C-terminal alpha-helix. In response to stress, the angiogenic activity of ANG is inhibited by RNH1 in the nucleus. In terms of biological role, secreted ribonuclease that can either promote or restrict cell proliferation of target cells, depending on the context. Endocytosed in target cells via its receptor PLXNB2 and translocates to the cytoplasm or nucleus. Under stress conditions, localizes to the cytoplasm and promotes the assembly of stress granules (SGs): specifically cleaves a subset of tRNAs within anticodon loops to produce tRNA-derived stress-induced fragments (tiRNAs), resulting in translation repression and inhibition of cell proliferation. tiRNas also prevent formation of apoptosome, thereby promoting cell survival. Preferentially cleaves RNAs between a pyrimidine and an adenosine residue, suggesting that it cleaves the anticodon loop of tRNA(Ala) (32-UUAGCAU-38) after positions 33 and 36. Cleaves a subset of tRNAs, including tRNA(Ala), tRNA(Glu), tRNA(Gly), tRNA(Lys), tRNA(Val), tRNA(His), tRNA(Asp) and tRNA(Sec). Under growth conditions and in differentiated cells, translocates to the nucleus and stimulates ribosomal RNA (rRNA) transcription, including that containing the initiation site sequences of 45S rRNA, thereby promoting cell growth and proliferation. Angiogenin induces vascularization of normal and malignant tissues via its ability to promote rRNA transcription. Involved in hematopoietic stem and progenitor cell (HSPC) growth and survival by promoting rRNA transcription in growth conditions and inhibiting translation in response to stress, respectively. Mediates the crosstalk between myeloid and intestinal epithelial cells to protect the intestinal epithelial barrier integrity: secreted by myeloid cells and promotes intestinal epithelial cells proliferation and survival. Also mediates osteoclast-endothelial cell crosstalk in growing bone: produced by osteoclasts and protects the neighboring vascular cells against senescence by promoting rRNA transcription. This is Angiogenin (ANG) from Gorilla gorilla gorilla (Western lowland gorilla).